The chain runs to 425 residues: Sucrose-phosphatase 2 (425 aa).

This sequence belongs to the sucrose phosphatase family. In terms of assembly, homodimer. Mg(2+) serves as cofactor.

It catalyses the reaction sucrose 6(F)-phosphate + H2O = sucrose + phosphate. It functions in the pathway glycan biosynthesis; sucrose biosynthesis; sucrose from D-fructose 6-phosphate and UDP-alpha-D-glucose: step 2/2. Inhibited by EDTA. Catalyzes the final step of sucrose synthesis. This is Sucrose-phosphatase 2 (SPP2) from Nicotiana tabacum (Common tobacco).